We begin with the raw amino-acid sequence, 369 residues long: Glutamate 5-kinase (369 aa).

Residue Lys8 participates in ATP binding. Substrate-binding residues include Ser49, Asp136, and Asn148. ATP-binding positions include 168-169 and 211-217; these read TD and TGGMATK. In terms of domain architecture, PUA spans 276-354; that stretch reads KGELWLDEGA…TELANILGYA (79 aa).

This sequence belongs to the glutamate 5-kinase family.

It is found in the cytoplasm. The catalysed reaction is L-glutamate + ATP = L-glutamyl 5-phosphate + ADP. It participates in amino-acid biosynthesis; L-proline biosynthesis; L-glutamate 5-semialdehyde from L-glutamate: step 1/2. Functionally, catalyzes the transfer of a phosphate group to glutamate to form L-glutamate 5-phosphate. The polypeptide is Glutamate 5-kinase (Thermosynechococcus vestitus (strain NIES-2133 / IAM M-273 / BP-1)).